A 189-amino-acid chain; its full sequence is RPW8-like protein 1 (189 aa).

The region spanning 1 to 153 is the RPW8 domain; it reads MPLVELLTSA…ITRQPMDIIE (153 aa). Residues 7-24 traverse the membrane as a helical segment; the sequence is LTSAALGLSLQLLHDAII. Coiled coils occupy residues 65–92 and 126–147; these read FRKVIEELKRLLEKAIRLVDAYAELKLR and DIKKLMGKMSEMNTKLDDITRQ. Residue Asn-177 is glycosylated (N-linked (GlcNAc...) asparagine).

This sequence belongs to the plant RPW8 protein family.

The protein localises to the membrane. Its function is as follows. Probable disease resistance (R) protein. This is RPW8-like protein 1 from Arabidopsis thaliana (Mouse-ear cress).